The primary structure comprises 220 residues: Ribose-5-phosphate isomerase A (220 aa).

Substrate is bound by residues Thr25–Thr28, Asp80–Asp83, and Lys93–Gly96. The active-site Proton acceptor is the Glu102. Lys120 is a substrate binding site.

This sequence belongs to the ribose 5-phosphate isomerase family. As to quaternary structure, homodimer.

The catalysed reaction is aldehydo-D-ribose 5-phosphate = D-ribulose 5-phosphate. The protein operates within carbohydrate degradation; pentose phosphate pathway; D-ribose 5-phosphate from D-ribulose 5-phosphate (non-oxidative stage): step 1/1. Catalyzes the reversible conversion of ribose-5-phosphate to ribulose 5-phosphate. This Bacillus cereus (strain ATCC 14579 / DSM 31 / CCUG 7414 / JCM 2152 / NBRC 15305 / NCIMB 9373 / NCTC 2599 / NRRL B-3711) protein is Ribose-5-phosphate isomerase A.